The sequence spans 594 residues: Laccase-2 (594 aa).

Positions 1 to 20 (MGGIIKLSFLFCSLISLVNS) are cleaved as a signal peptide. A glycan (N-linked (GlcNAc...) asparagine) is linked at Asn67. 2 consecutive Plastocyanin-like domains span residues 70–183 (EALA…HSPN) and 195–357 (DRIV…RYTG). Cu cation-binding residues include His117 and His119. N-linked (GlcNAc...) asparagine glycosylation is present at Asn124. An intrachain disulfide couples Cys138 to Cys578. Cu cation contacts are provided by His162 and His164. N-linked (GlcNAc...) asparagine glycans are attached at residues Asn242, Asn286, Asn320, Asn358, Asn397, Asn430, Asn452, and Asn458. A Plastocyanin-like 3 domain is found at 466–563 (PVNIIINNLD…KMAVVVVQPE (98 aa)). Positions 480, 483, and 485 each coordinate Cu cation. A glycan (N-linked (GlcNAc...) asparagine) is linked at Asn508. Cu cation-binding residues include His543, Cys544, His545, and His549.

The protein belongs to the multicopper oxidase family. Requires Cu cation as cofactor.

It localises to the secreted. It is found in the cell wall. The enzyme catalyses 4 hydroquinone + O2 = 4 benzosemiquinone + 2 H2O. Laccase that catalyzes the oxidation of certain aromatic compounds, including L-dopa, to quinones, which then polymerize to melanin. Able to oxidize a wide variety of aromatic diphenol and diamino groups in the ortho, meta, and para positions but not monophenolic groups such as in phenol, tyramine, or tyrosine. Plays an important role in virulence. Plays a role in dissemination to extrapulmonary sites but is not involved in pulmonary growth or in elicitation of cellular immune responses in the lung. In Cryptococcus neoformans var. grubii serotype A (strain H99 / ATCC 208821 / CBS 10515 / FGSC 9487) (Filobasidiella neoformans var. grubii), this protein is Laccase-2 (LAC2).